The following is a 109-amino-acid chain: UPF0060 membrane protein PA14_21660 (109 aa).

4 helical membrane passes run 5–25 (LWFV…YLWL), 27–47 (LGKS…FALL), 59–79 (AYAA…AFVE), and 84–104 (LWSD…VLFG).

Belongs to the UPF0060 family.

It localises to the cell inner membrane. In Pseudomonas aeruginosa (strain UCBPP-PA14), this protein is UPF0060 membrane protein PA14_21660.